Here is a 1439-residue protein sequence, read N- to C-terminus: MEENSNKFEQELKEIGQDRNQFPHISVEESLQEFDSFSNKIENESKQFGAQKDPESYMAGGETEEDFKLRKYFENSERMHLENGGNEKKMGVSIRNLTVVGLGADASVIADMSTPFFSILNFFKPSFWTKKTSTFDILHDVTTFCKDGEMVLVLGRPGAGCSTLLRVIANQTASYVSVKGDVRYGGIPSKEFERYRAESIYTPEEDSHHPTLTVRETLDFALKCKTPGNRLPDETKRSFREKVFNLLLSMFGIVHQADTIVGNEYVRGLSGGERKRLTITEAMVSSASITCWDCSTRGLDAASAFDYAKSIRIMSDTLHKTTIASFYQASDSIYNVFDKVCVLEKGRCIYFGPVGMAKQYFMSLGFDCEPRKSTPDFLTGVTNPQERIIKKGFEGRTPETSADFEAAWKNSDIYRDQLQEQKEYEELIERTQPKVAFVQEVKDENSKTNFKKSQYTTSFITQVVALTKRNFQLILNDKFGLFTKYLSVLIQAFVYSSVFYNMASDINGLFTRGGAILSAVIFNAFLSVGEMSMTFIGRRVLQKHKSYALYRPSALHIAQVVNDIPFTLLQVFLFSIIAYFMFGLEYDGGKFFIFSFTLVGASLACTALFRCFGYLCPSMYIAQNISNVFIIFMLTYSGYTVPIPKMHPWFSWFRHINIFTYAFKAIMANEFEGKEFNCLESAIPYGPAYQGSEFDAYRICPLGGIEQGSLYFKGEFYMDKTLRFKEGEMSQNVIIVYCWWIFFVICNMLAMEYIDHTSGGYTHKVYKKGKAPKMNDVEEEKQQNAIVANATNNMKDTLHMDGGIFTWQNIRYTVKVPGGERLLLNNIEGWIKPGQMTALMGSSGAGKTTLLDVLAKRKTLGVVEGDSHLNGRELEIDFERITGYVEQMDVHNPGLTVREALRFSAKLRQEPEVSLEEKFKYVEHVLEMMEMKHLGDALIGTLETGVGISVEERKRLTIGVELVAKPQILFLDEPTSGLDAQSSYNIIKFIRKLADAGMPLVCTIHQPSSVLFEHFDRILLLAKGGKTVYFGDIGEKSKTLTSYFERHGVRPCTESENPAEYILEATGAGVHGKSDVNWPETWKQSPELADISRELAALKEQGAQQYKIRSDGPAREFSQSTWYQTKEVYKRLNLIWWRDPYYTYGSFVQSALCGLIIGFTFWNLQGSSSDMNQRIFFIFEALMLGILLIFVVMPQLISQREYFKRDFASKFYSWFPFAISIVVVELPFIVISGTIFFFCSFWTAGLDKTSDSEQTFYFWFIFVIFLFFCVSFGQAVAAVCINMFFAMTLIPLLIVFLFLFSGVMTPPSSIPTFWRGWVYHLNPCRYFMEGIVTNILKTVDVKCSYEDMITFTFPKSYNTCQNYTSAFQSYGPSGYVESSILNGEPACSYCIYKNGEQYYKTLGWSDDNRWRNVGIIICFFVFNILMVILFVYLTRKGSR.

Positions 1 to 17 are enriched in basic and acidic residues; the sequence is MEENSNKFEQELKEIGQ. Residues 1–21 form a disordered region; the sequence is MEENSNKFEQELKEIGQDRNQ. In terms of domain architecture, ABC transporter 1 spans 117-370; that stretch reads FSILNFFKPS…FMSLGFDCEP (254 aa). An ABC transmembrane type-2 1 domain is found at 475–700; it reads LNDKFGLFTK…GSEFDAYRIC (226 aa). 6 consecutive transmembrane segments (helical) span residues 479 to 499, 516 to 536, 564 to 584, 589 to 609, 614 to 634, and 734 to 754; these read FGLF…SSVF, ILSA…MTFI, IPFT…MFGL, GKFF…TALF, YLCP…IFML, and IIVY…MEYI. One can recognise an ABC transporter 2 domain in the interval 805-1049; it reads FTWQNIRYTV…LTSYFERHGV (245 aa). Residue 841–848 coordinates ATP; the sequence is GSSGAGKT. Residues 1141–1366 form the ABC transmembrane type-2 2 domain; the sequence is YYTYGSFVQS…YNTCQNYTSA (226 aa). Helical transmembrane passes span 1144–1164, 1175–1195, 1217–1237, 1256–1276, 1283–1303, and 1413–1433; these read YGSF…FWNL, IFFI…VMPQ, FAIS…TIFF, FYFW…GQAV, MFFA…FSGV, and VGII…FVYL.

It belongs to the ABC transporter superfamily. ABCG family. PDR (TC 3.A.1.205) subfamily.

It localises to the membrane. This Dictyostelium discoideum (Social amoeba) protein is ABC transporter G family member 14 (abcG14).